The primary structure comprises 326 residues: Adenine deaminase (326 aa).

3 residues coordinate Zn(2+): histidine 14, histidine 16, and histidine 194. The Proton donor role is filled by glutamate 197. Aspartate 275 serves as a coordination point for Zn(2+). Aspartate 276 is a binding site for substrate.

This sequence belongs to the metallo-dependent hydrolases superfamily. Adenosine and AMP deaminases family. Adenine deaminase type 2 subfamily. The cofactor is Zn(2+).

It catalyses the reaction adenine + H2O + H(+) = hypoxanthine + NH4(+). In terms of biological role, catalyzes the hydrolytic deamination of adenine to hypoxanthine. Plays an important role in the purine salvage pathway and in nitrogen catabolism. This Crocosphaera subtropica (strain ATCC 51142 / BH68) (Cyanothece sp. (strain ATCC 51142)) protein is Adenine deaminase.